A 139-amino-acid chain; its full sequence is Small ribosomal subunit protein uS11 (139 aa).

The tract at residues 117-139 (VEDVTPIPHDGTRPKGGRRGRRV) is disordered.

The protein belongs to the universal ribosomal protein uS11 family. As to quaternary structure, part of the 30S ribosomal subunit.

Functionally, located on the platform of the 30S subunit. The polypeptide is Small ribosomal subunit protein uS11 (Thermococcus onnurineus (strain NA1)).